We begin with the raw amino-acid sequence, 248 residues long: Ubiquinone/menaquinone biosynthesis C-methyltransferase UbiE (248 aa).

Ser-68 and Asp-92 together coordinate S-adenosyl-L-methionine.

This sequence belongs to the class I-like SAM-binding methyltransferase superfamily. MenG/UbiE family.

It catalyses the reaction a 2-demethylmenaquinol + S-adenosyl-L-methionine = a menaquinol + S-adenosyl-L-homocysteine + H(+). The enzyme catalyses a 2-methoxy-6-(all-trans-polyprenyl)benzene-1,4-diol + S-adenosyl-L-methionine = a 5-methoxy-2-methyl-3-(all-trans-polyprenyl)benzene-1,4-diol + S-adenosyl-L-homocysteine + H(+). It functions in the pathway quinol/quinone metabolism; menaquinone biosynthesis; menaquinol from 1,4-dihydroxy-2-naphthoate: step 2/2. The protein operates within cofactor biosynthesis; ubiquinone biosynthesis. In terms of biological role, methyltransferase required for the conversion of demethylmenaquinol (DMKH2) to menaquinol (MKH2) and the conversion of 2-polyprenyl-6-methoxy-1,4-benzoquinol (DDMQH2) to 2-polyprenyl-3-methyl-6-methoxy-1,4-benzoquinol (DMQH2). The protein is Ubiquinone/menaquinone biosynthesis C-methyltransferase UbiE of Rickettsia rickettsii (strain Iowa).